Here is a 210-residue protein sequence, read N- to C-terminus: Small ribosomal subunit protein uS3 (210 aa).

The KH type-2 domain occupies 17–86 (IDEFLEKELR…NPQIDVQEIK (70 aa)).

Belongs to the universal ribosomal protein uS3 family. As to quaternary structure, part of the 30S ribosomal subunit.

In terms of biological role, binds the lower part of the 30S subunit head. The protein is Small ribosomal subunit protein uS3 of Pyrococcus abyssi (strain GE5 / Orsay).